The chain runs to 509 residues: Maturase K (509 aa).

The protein belongs to the intron maturase 2 family. MatK subfamily.

It localises to the plastid. The protein resides in the chloroplast. Functionally, usually encoded in the trnK tRNA gene intron. Probably assists in splicing its own and other chloroplast group II introns. The polypeptide is Maturase K (Austrocylindropuntia vestita (Cactus)).